Here is a 143-residue protein sequence, read N- to C-terminus: Nucleoside diphosphate kinase (143 aa).

Residues K11, F59, R87, T93, R104, and N114 each coordinate ATP. H117 functions as the Pros-phosphohistidine intermediate in the catalytic mechanism.

It belongs to the NDK family. As to quaternary structure, homotetramer. The cofactor is Mg(2+).

Its subcellular location is the cytoplasm. It carries out the reaction a 2'-deoxyribonucleoside 5'-diphosphate + ATP = a 2'-deoxyribonucleoside 5'-triphosphate + ADP. It catalyses the reaction a ribonucleoside 5'-diphosphate + ATP = a ribonucleoside 5'-triphosphate + ADP. In terms of biological role, major role in the synthesis of nucleoside triphosphates other than ATP. The ATP gamma phosphate is transferred to the NDP beta phosphate via a ping-pong mechanism, using a phosphorylated active-site intermediate. The sequence is that of Nucleoside diphosphate kinase from Shewanella piezotolerans (strain WP3 / JCM 13877).